The chain runs to 184 residues: Cathelicidin-related peptide Pt_CRAMP2 (184 aa).

A signal peptide spans 1-22 (MDGFFWKTWLVVAALAIGGTSS). Positions 23–150 (LPHKPLTYEE…EDEKDQPRRV (128 aa)) are excised as a propeptide. 2 disulfide bridges follow: Cys81-Cys92 and Cys103-Cys120. Acidic residues predominate over residues 125 to 144 (EDEEQNQEEEEEEEKEEDEK). The tract at residues 125–147 (EDEEQNQEEEEEEEKEEDEKDQP) is disordered.

It belongs to the cathelicidin family. Expressed by the venom gland.

It localises to the secreted. The protein localises to the target cell membrane. In terms of biological role, potent antimicrobial peptide against most of Gram-negative bacteria, some Gram-positive bacteria (Bacillus) and some fungi (C.albicans, P.pastoris, A.terreus, A.nidulans, and C.globosum). Adopts an amphipathic alpha helical conformation, that may allow to partition into the target membrane. No hemolytic and cytotoxic activities have been observed on mammalian cells. This is Cathelicidin-related peptide Pt_CRAMP2 from Pseudonaja textilis (Eastern brown snake).